Consider the following 149-residue polypeptide: Transcriptional regulator MraZ (149 aa).

SpoVT-AbrB domains lie at K7–H54 and A83–N126.

It belongs to the MraZ family. In terms of assembly, forms oligomers.

It is found in the cytoplasm. The protein resides in the nucleoid. The polypeptide is Transcriptional regulator MraZ (Rickettsia canadensis (strain McKiel)).